The primary structure comprises 124 residues: Small ribosomal subunit protein uS12 (124 aa).

The segment at 1–23 is disordered; the sequence is MATINQLVRKPRRSKVTKSNSAA. D89 carries the post-translational modification 3-methylthioaspartic acid.

It belongs to the universal ribosomal protein uS12 family. As to quaternary structure, part of the 30S ribosomal subunit. Contacts proteins S8 and S17. May interact with IF1 in the 30S initiation complex.

With S4 and S5 plays an important role in translational accuracy. In terms of biological role, interacts with and stabilizes bases of the 16S rRNA that are involved in tRNA selection in the A site and with the mRNA backbone. Located at the interface of the 30S and 50S subunits, it traverses the body of the 30S subunit contacting proteins on the other side and probably holding the rRNA structure together. The combined cluster of proteins S8, S12 and S17 appears to hold together the shoulder and platform of the 30S subunit. The sequence is that of Small ribosomal subunit protein uS12 from Pseudoalteromonas translucida (strain TAC 125).